A 255-amino-acid chain; its full sequence is tRNA (guanine-N(7)-)-methyltransferase (255 aa).

Positions 1 to 21 (MMHDDPNEAGLPPHDDAIPDE) are disordered. The S-adenosyl-L-methionine site is built by Glu-86, Glu-111, Asp-138, and Asp-161. Residue Asp-161 is part of the active site. Residues Lys-165, Asp-197, and 232–235 (TKFE) contribute to the substrate site.

The protein belongs to the class I-like SAM-binding methyltransferase superfamily. TrmB family.

It catalyses the reaction guanosine(46) in tRNA + S-adenosyl-L-methionine = N(7)-methylguanosine(46) in tRNA + S-adenosyl-L-homocysteine. It participates in tRNA modification; N(7)-methylguanine-tRNA biosynthesis. In terms of biological role, catalyzes the formation of N(7)-methylguanine at position 46 (m7G46) in tRNA. The chain is tRNA (guanine-N(7)-)-methyltransferase from Burkholderia lata (strain ATCC 17760 / DSM 23089 / LMG 22485 / NCIMB 9086 / R18194 / 383).